We begin with the raw amino-acid sequence, 49 residues long: DNA-directed RNA polymerase subunit Rpo12 (49 aa).

Zn(2+) is bound by residues Cys11, Cys27, and Cys30.

It belongs to the archaeal Rpo12/eukaryotic RPC10 RNA polymerase subunit family. Part of the RNA polymerase complex. It depends on Zn(2+) as a cofactor.

The protein localises to the cytoplasm. The enzyme catalyses RNA(n) + a ribonucleoside 5'-triphosphate = RNA(n+1) + diphosphate. Its function is as follows. DNA-dependent RNA polymerase (RNAP) catalyzes the transcription of DNA into RNA using the four ribonucleoside triphosphates as substrates. This Thermococcus onnurineus (strain NA1) protein is DNA-directed RNA polymerase subunit Rpo12.